The sequence spans 213 residues: Redox-sensing transcriptional repressor Rex (213 aa).

The H-T-H motif DNA-binding region spans 17 to 56; the sequence is LYYRIFKRFYADQVEKASSKQIADAMGIDSATVRRDFSYF. An NAD(+)-binding site is contributed by 91-96; the sequence is GCGNIG.

The protein belongs to the transcriptional regulatory Rex family. Homodimer.

The protein resides in the cytoplasm. Its function is as follows. Modulates transcription in response to changes in cellular NADH/NAD(+) redox state. The polypeptide is Redox-sensing transcriptional repressor Rex (Streptococcus uberis (strain ATCC BAA-854 / 0140J)).